Consider the following 355-residue polypeptide: Probable nitronate monooxygenase (355 aa).

FMN contacts are provided by residues Asn-71, Gln-175, Gly-180, Gly-219, and 238 to 241 (QMGT).

This sequence belongs to the nitronate monooxygenase family. NMO class I subfamily. FMN serves as cofactor.

It catalyses the reaction 3 propionate 3-nitronate + 3 O2 + H2O = 3 3-oxopropanoate + 2 nitrate + nitrite + H2O2 + 3 H(+). In terms of biological role, nitronate monooxygenase that uses molecular oxygen to catalyze the oxidative denitrification of alkyl nitronates. Acts on propionate 3-nitronate (P3N), the presumed physiological substrate. Probably functions in the detoxification of P3N, a metabolic poison produced by plants and fungi as a defense mechanism. This chain is Probable nitronate monooxygenase, found in Staphylococcus saprophyticus subsp. saprophyticus (strain ATCC 15305 / DSM 20229 / NCIMB 8711 / NCTC 7292 / S-41).